Reading from the N-terminus, the 422-residue chain is Acyl-[acyl-carrier-protein] desaturase 6, chloroplastic (422 aa).

Residues 1–46 (MAATATMAMPLANRLRCKPNTNSSSPSRTLFGRRVTMISSSRWMCR) constitute a chloroplast transit peptide. Glutamate 154, glutamate 192, histidine 195, glutamate 245, glutamate 280, and histidine 283 together coordinate Fe cation.

It belongs to the fatty acid desaturase type 2 family. Homodimer. The cofactor is Fe(2+).

Its subcellular location is the plastid. The protein resides in the chloroplast. It participates in lipid metabolism; fatty acid metabolism. In terms of biological role, introduces a cis double bond in the acyl chain of an acyl-[acyl-carrier protein]. This Oryza sativa subsp. indica (Rice) protein is Acyl-[acyl-carrier-protein] desaturase 6, chloroplastic.